The primary structure comprises 249 residues: Triosephosphate isomerase (249 aa).

Residues Asn10 and Lys12 each contribute to the substrate site. The Electrophile role is filled by His94. Catalysis depends on Glu166, which acts as the Proton acceptor.

It belongs to the triosephosphate isomerase family. In terms of assembly, homodimer. In terms of processing, the N-terminus is blocked.

It carries out the reaction D-glyceraldehyde 3-phosphate = dihydroxyacetone phosphate. The protein operates within carbohydrate biosynthesis; gluconeogenesis. Its pathway is carbohydrate degradation; glycolysis; D-glyceraldehyde 3-phosphate from glycerone phosphate: step 1/1. The polypeptide is Triosephosphate isomerase (TPI1) (Paracoccidioides lutzii (strain ATCC MYA-826 / Pb01) (Paracoccidioides brasiliensis)).